A 373-amino-acid chain; its full sequence is NAD(P)H-quinone oxidoreductase subunit 1 (373 aa).

Transmembrane regions (helical) follow at residues 28–48, 98–118, 129–149, 177–197, 205–225, 267–287, 309–329, and 348–368; these read LLWL…GVLV, LLFT…WLII, VGVG…GLLM, LALA…VDIV, ILSW…ICAL, VLSA…PIPV, TVGI…AILL, and FLLP…LAFP.

The protein belongs to the complex I subunit 1 family. In terms of assembly, NDH-1 is composed of at least 11 different subunits.

Its subcellular location is the cellular thylakoid membrane. The enzyme catalyses a plastoquinone + NADH + (n+1) H(+)(in) = a plastoquinol + NAD(+) + n H(+)(out). It carries out the reaction a plastoquinone + NADPH + (n+1) H(+)(in) = a plastoquinol + NADP(+) + n H(+)(out). Its function is as follows. NDH-1 shuttles electrons from an unknown electron donor, via FMN and iron-sulfur (Fe-S) centers, to quinones in the respiratory and/or the photosynthetic chain. The immediate electron acceptor for the enzyme in this species is believed to be plastoquinone. Couples the redox reaction to proton translocation, and thus conserves the redox energy in a proton gradient. The protein is NAD(P)H-quinone oxidoreductase subunit 1 of Synechococcus sp. (strain CC9605).